The primary structure comprises 461 residues: MTNYPFFRQGTIFVDNSAIQRNSENKNSLSIENIFGRFPKEFFQFFSINVSKSTTKKSSVVIKPSTITAPWLENEYLDSNTSLLSVHSIQPSFIGMSDFAIGLDPSLKRILPEIRFRLDFQHLKSIAKGATSTIKVVTHRDKITDAKIYYAAKVYRKTKTSHKKRLNTMVYFLREWSIQPKLDHPNILKVICPCVTLTSVFNKSAGFCLVQEYCPQGDLFKQIEEKVLTLEDKCCYLKQILQAVAYLQSQRIAHRDLKPENILIGRDGLLKLTDFGTSEIVGNPGDNESIRFVSGAVGSLAYLAPEAFHENEYCGLLADRWSCGILLKVLFTGYFPFKTSVKTDLYYSKYMSILTDTCGISSTDESSFQTEVIKQIPTLQPLRYIPEGAKKIILSLLNPDSQNRPSLDSILGTAWVRKLDCCSNFSTDHENKSLQEVDFDASKPITRKSLIPRIHNHQTLV.

Positions 120–416 constitute a Protein kinase domain; that stretch reads FQHLKSIAKG…LDSILGTAWV (297 aa). ATP contacts are provided by residues 126-134 and lysine 153; that span reads IAKGATSTI. Residue aspartate 256 is the Proton acceptor of the active site.

It belongs to the protein kinase superfamily. Ser/Thr protein kinase family.

The protein resides in the mitochondrion. It carries out the reaction L-seryl-[protein] + ATP = O-phospho-L-seryl-[protein] + ADP + H(+). The enzyme catalyses L-threonyl-[protein] + ATP = O-phospho-L-threonyl-[protein] + ADP + H(+). Its function is as follows. Has a role late in meiosis. The chain is Serine/threonine-protein kinase ppk24, mitochondrial (ppk24) from Schizosaccharomyces pombe (strain 972 / ATCC 24843) (Fission yeast).